Here is a 327-residue protein sequence, read N- to C-terminus: Zinc transport protein ZntB (327 aa).

Over 1 to 273 (MEAIKGSDVN…ARRTYTMSLM (273 aa)) the chain is Cytoplasmic. A helical membrane pass occupies residues 274–294 (AMVFLPSTFLTGLFGVNLGGI). The Periplasmic portion of the chain corresponds to 295 to 300 (PGGGWQ). Residues 301–321 (FGFSIFCILLVVLIGGVALWL) traverse the membrane as a helical segment. Residues 322–327 (HRSKWL) lie on the Cytoplasmic side of the membrane.

The protein belongs to the CorA metal ion transporter (MIT) (TC 1.A.35) family.

The protein resides in the cell inner membrane. The catalysed reaction is Zn(2+)(out) + H(+)(out) = Zn(2+)(in) + H(+)(in). Its function is as follows. Zinc transporter. Acts as a Zn(2+):proton symporter, which likely mediates zinc ion uptake. This Escherichia coli O6:K15:H31 (strain 536 / UPEC) protein is Zinc transport protein ZntB.